The primary structure comprises 820 residues: Cation/H(+) antiporter 17 (820 aa).

A run of 12 helical transmembrane segments spans residues 30–50 (LPLL…LAFL), 58–75 (RVIA…SALG), 90–110 (LTVL…LVGL), 124–144 (ALSI…GTSF), 159–179 (FLVF…ARIL), 192–212 (IALS…ALAV), 222–242 (LTSL…IFVV), 276–296 (FVTD…GVIF), 313–333 (LVSG…TNVA), 342–362 (GLLV…TVLV), 374–394 (LALG…LNIG), and 404–424 (IFAI…PLVL). 2 positions are modified to phosphoserine: serine 817 and serine 819.

This sequence belongs to the monovalent cation:proton antiporter 2 (CPA2) transporter (TC 2.A.37) family. CHX (TC 2.A.37.4) subfamily. As to expression, predominantly expressed in epidermal and cortical cells of mature roots but also barely detected in leaves.

The protein resides in the membrane. Its function is as follows. Operates as a K(+)/H(+) antiporter that controls K(+) acquisition and homeostasis. The sequence is that of Cation/H(+) antiporter 17 (CHX17) from Arabidopsis thaliana (Mouse-ear cress).